We begin with the raw amino-acid sequence, 134 residues long: RuBisCO chaperone RbcX (134 aa).

Residues 97 to 134 (SNGNHRRSLLERLTQVDSSSTDQTEPNPGESDTSEDSE) form a disordered region. A compositionally biased stretch (polar residues) spans 111-122 (QVDSSSTDQTEP).

This sequence belongs to the RbcX family. As to quaternary structure, homodimer (RbcX2). Interacts with the exposed C-terminal peptide of RbcL ('Glu-459-Asp-468'); binds 2 RbcL peptides per RbcX2, stapling them into an RbcL2 dimer. A slightly longer peptide binds with a higher affinity, but no long-term stable interaction with RbcL is detected. Contacts a second RbcL monomer via its peripheral polar surface.

It localises to the carboxysome. The protein resides in the cytoplasm. Functionally, an RbcL-specific chaperone. Required for assembly of the RbcL8 core, acting downstream of the major chaperonin (GroEL-GroES). Acts on newly folded RbcL, has a transient dynamic interaction with RbcL and is eventually displaced by RbcS. The central cleft of the RbcX homodimer (RbcX2) binds the C-terminus of an RbcL monomer, stabilizing the C-terminus and probably preventing its reassociation with chaperonin GroEL-ES. At the same time the peripheral region of RbcX2 binds a second RbcL monomer, bridging the RbcL homodimers in the correct orientation. The RbcX2(2)-bound RbcL dimers then assemble into the RbcL8 core (RbcL8-(RbcX2)8). RbcS binding triggers the release of RbcX2. Required for optimal reconstitution of RuBisCO into its RbcL8S8 holoenzyme form upon expression of rbcL-rbcS subunits in E.coli, and probably also in situ. A frameshift mutation that replaces half the protein reduces accumulation of both RbcL and RbcS subunits and halves activity of RuBisCO in situ and in E.coli. The protein is RuBisCO chaperone RbcX of Picosynechococcus sp. (strain ATCC 27264 / PCC 7002 / PR-6) (Agmenellum quadruplicatum).